A 189-amino-acid chain; its full sequence is UPF0398 protein LVIS_0849 (189 aa).

The protein belongs to the UPF0398 family.

The sequence is that of UPF0398 protein LVIS_0849 from Levilactobacillus brevis (strain ATCC 367 / BCRC 12310 / CIP 105137 / JCM 1170 / LMG 11437 / NCIMB 947 / NCTC 947) (Lactobacillus brevis).